A 484-amino-acid polypeptide reads, in one-letter code: Serine protease HTR4 (484 aa).

Residues 1–28 (MARPLQRPAGLGPFVLLWLLLPAPSGRG) form the signal peptide. Residues 36-114 (PVPRCPAACE…GRPLGTCGCP (79 aa)) enclose the IGFBP N-terminal domain. 8 disulfides stabilise this stretch: C40–C66, C44–C68, C49–C69, C55–C72, C80–C94, C88–C111, C113–C132, and C121–C157. One can recognise a Kazal-like domain in the interval 105 to 159 (GRPLGTCGCPAAGATVCGSDGRTYRSLCALRAENRAARLRGALPAVPVQKGDCGD). A serine protease region spans residues 209-369 (ASGFIVSEDG…IPSDRIRQFL (161 aa)). Active-site charge relay system residues include H225, D255, and S333. One can recognise a PDZ domain in the interval 390–472 (LRMLPLTMNL…LSLLVRRKSQ (83 aa)).

This sequence belongs to the peptidase S1C family.

The protein localises to the secreted. Functionally, serine protease. This Bos taurus (Bovine) protein is Serine protease HTR4 (HTRA4).